The chain runs to 176 residues: Ribosome maturation factor RimM (176 aa).

One can recognise a PRC barrel domain in the interval 97–176 (GDEFYWRELV…TIQVDWDPSF (80 aa)).

The protein belongs to the RimM family. As to quaternary structure, binds ribosomal protein uS19.

Its subcellular location is the cytoplasm. An accessory protein needed during the final step in the assembly of 30S ribosomal subunit, possibly for assembly of the head region. Essential for efficient processing of 16S rRNA. May be needed both before and after RbfA during the maturation of 16S rRNA. It has affinity for free ribosomal 30S subunits but not for 70S ribosomes. This chain is Ribosome maturation factor RimM, found in Pseudoalteromonas atlantica (strain T6c / ATCC BAA-1087).